Consider the following 306-residue polypeptide: Glutamyl-Q tRNA(Asp) synthetase (306 aa).

L-glutamate-binding positions include 4–8 and glutamate 40; that span reads RYAPS. Residues 7 to 17 carry the 'HIGH' region motif; sequence PSPSGDLHFGN. The Zn(2+) site is built by cysteine 92, cysteine 94, tyrosine 113, and cysteine 117. The L-glutamate site is built by tyrosine 180 and arginine 198. Residues 236–240 carry the 'KMSKS' region motif; the sequence is RLAKR. Residue lysine 239 coordinates ATP.

The protein belongs to the class-I aminoacyl-tRNA synthetase family. GluQ subfamily. Zn(2+) is required as a cofactor.

In terms of biological role, catalyzes the tRNA-independent activation of glutamate in presence of ATP and the subsequent transfer of glutamate onto a tRNA(Asp). Glutamate is transferred on the 2-amino-5-(4,5-dihydroxy-2-cyclopenten-1-yl) moiety of the queuosine in the wobble position of the QUC anticodon. The chain is Glutamyl-Q tRNA(Asp) synthetase from Corynebacterium efficiens (strain DSM 44549 / YS-314 / AJ 12310 / JCM 11189 / NBRC 100395).